A 631-amino-acid chain; its full sequence is ATP-dependent zinc metalloprotease FtsH (631 aa).

Over 1 to 2 (MK) the chain is Stromal. A helical transmembrane segment spans residues 3-23 (ISWKNILLTLIPLGLISFLVW). Residues 24–118 (QGFNNTTNPQ…AHATNDSTPA (95 aa)) are Lumenal-facing. The chain crosses the membrane as a helical span at residues 119 to 139 (WSLIGNLIFPILLIAGLAFLF). Residues 140–631 (RRSSNLPGGP…IDYKSQLKST (492 aa)) lie on the Stromal side of the membrane. Position 213–220 (213–220 (GPPGTGKT)) interacts with ATP. His-434 is a Zn(2+) binding site. The active site involves Glu-435. Residues His-438 and Asp-512 each coordinate Zn(2+).

In the central section; belongs to the AAA ATPase family. The protein in the C-terminal section; belongs to the peptidase M41 family. As to quaternary structure, homohexamer. It depends on Zn(2+) as a cofactor.

The protein localises to the plastid. Its subcellular location is the chloroplast thylakoid membrane. Functionally, acts as a processive, ATP-dependent zinc metallopeptidase. This chain is ATP-dependent zinc metalloprotease FtsH, found in Guillardia theta (Cryptophyte).